A 240-amino-acid chain; its full sequence is Ribosomal RNA small subunit methyltransferase G (240 aa).

Residues G80, F85, 131–132 (AE), and R150 contribute to the S-adenosyl-L-methionine site.

Belongs to the methyltransferase superfamily. RNA methyltransferase RsmG family.

The protein localises to the cytoplasm. Specifically methylates the N7 position of a guanine in 16S rRNA. The polypeptide is Ribosomal RNA small subunit methyltransferase G (Dictyoglomus thermophilum (strain ATCC 35947 / DSM 3960 / H-6-12)).